A 109-amino-acid chain; its full sequence is Small ribosomal subunit protein bS6 (109 aa).

It belongs to the bacterial ribosomal protein bS6 family.

In terms of biological role, binds together with bS18 to 16S ribosomal RNA. This chain is Small ribosomal subunit protein bS6, found in Ehrlichia chaffeensis (strain ATCC CRL-10679 / Arkansas).